The primary structure comprises 180 residues: Translation initiation factor IF-3 (180 aa).

This sequence belongs to the IF-3 family. As to quaternary structure, monomer.

It localises to the cytoplasm. IF-3 binds to the 30S ribosomal subunit and shifts the equilibrium between 70S ribosomes and their 50S and 30S subunits in favor of the free subunits, thus enhancing the availability of 30S subunits on which protein synthesis initiation begins. The chain is Translation initiation factor IF-3 from Pasteurella multocida (strain Pm70).